The chain runs to 610 residues: All-trans-retinol 13,14-reductase (610 aa).

The N-terminal stretch at 1–18 (MWLPLVLFLAVLLLAVVC) is a signal peptide.

This sequence belongs to the carotenoid/retinoid oxidoreductase family. CrtISO subfamily. NAD(+) serves as cofactor. It depends on NADP(+) as a cofactor. The cofactor is FAD.

It localises to the endoplasmic reticulum membrane. It carries out the reaction all-trans-13,14-dihydroretinol + A = all-trans-retinol + AH2. Catalyzes the saturation of all-trans-retinol to all-trans-13,14-dihydroretinol. Does not exhibit any activity toward all-trans-retinoic acid, nor 9-cis, 11-cis or 13-cis-retinol isomers. May play a role in the metabolism of vitamin A. Independently of retinol conversion, may regulate liver metabolism upstream of MLXIPL/ChREBP. May play a role in adipocyte differentiation. The chain is All-trans-retinol 13,14-reductase (RETSAT) from Macaca fascicularis (Crab-eating macaque).